The chain runs to 242 residues: Ribonuclease PH (242 aa).

Phosphate contacts are provided by residues arginine 89 and 127-129 (GTR).

The protein belongs to the RNase PH family. As to quaternary structure, homohexameric ring arranged as a trimer of dimers.

The catalysed reaction is tRNA(n+1) + phosphate = tRNA(n) + a ribonucleoside 5'-diphosphate. Functionally, phosphorolytic 3'-5' exoribonuclease that plays an important role in tRNA 3'-end maturation. Removes nucleotide residues following the 3'-CCA terminus of tRNAs; can also add nucleotides to the ends of RNA molecules by using nucleoside diphosphates as substrates, but this may not be physiologically important. Probably plays a role in initiation of 16S rRNA degradation (leading to ribosome degradation) during starvation. The protein is Ribonuclease PH of Neisseria meningitidis serogroup B (strain ATCC BAA-335 / MC58).